We begin with the raw amino-acid sequence, 297 residues long: Nucleotide-binding protein Bsph_0448 (297 aa).

An ATP-binding site is contributed by Gly-19 to Thr-26. Asp-70–Gly-73 provides a ligand contact to GTP.

Belongs to the RapZ-like family.

Functionally, displays ATPase and GTPase activities. The polypeptide is Nucleotide-binding protein Bsph_0448 (Lysinibacillus sphaericus (strain C3-41)).